The following is a 221-amino-acid chain: NADH-ubiquinone oxidoreductase chain 4 (221 aa).

5 consecutive transmembrane segments (helical) span residues 20-40 (ALIA…LLTM), 45-65 (LTGS…LFCL), 78-98 (LLIN…WFLL), 121-141 (IVSW…FSAA), and 170-190 (FLLL…SNFC).

It belongs to the complex I subunit 4 family.

The protein resides in the mitochondrion membrane. The catalysed reaction is a ubiquinone + NADH + 5 H(+)(in) = a ubiquinol + NAD(+) + 4 H(+)(out). In terms of biological role, core subunit of the mitochondrial membrane respiratory chain NADH dehydrogenase (Complex I) that is believed to belong to the minimal assembly required for catalysis. Complex I functions in the transfer of electrons from NADH to the respiratory chain. The immediate electron acceptor for the enzyme is believed to be ubiquinone. This chain is NADH-ubiquinone oxidoreductase chain 4 (ND4), found in Anopheles arabiensis (Mosquito).